Reading from the N-terminus, the 173-residue chain is Superoxide dismutase [Cu-Zn] (173 aa).

Positions 1-19 (MKRFSLAILALVVATGAQA) are cleaved as a signal peptide. 3 residues coordinate Cu cation: histidine 67, histidine 69, and histidine 92. Residues 72 to 113 (GSCQPATKDGKASAAESAGGHLDPQNTGKHEGPEGAGHLGDL) are disordered. Cysteine 74 and cysteine 169 are oxidised to a cystine. The Zn(2+) site is built by histidine 92, histidine 101, histidine 109, and aspartate 112. A Cu cation-binding site is contributed by histidine 147.

The protein belongs to the Cu-Zn superoxide dismutase family. As to quaternary structure, monomer. Requires Cu cation as cofactor. Zn(2+) is required as a cofactor.

It is found in the periplasm. It carries out the reaction 2 superoxide + 2 H(+) = H2O2 + O2. Functionally, destroys radicals which are normally produced within the cells and which are toxic to biological systems. The chain is Superoxide dismutase [Cu-Zn] (sodC) from Escherichia coli O157:H7.